We begin with the raw amino-acid sequence, 121 residues long: Small ribosomal subunit protein uS13 (121 aa).

Positions Gly94 to Lys121 are disordered. Residues Ser106 to Lys121 show a composition bias toward basic residues.

This sequence belongs to the universal ribosomal protein uS13 family. Part of the 30S ribosomal subunit. Forms a loose heterodimer with protein S19. Forms two bridges to the 50S subunit in the 70S ribosome.

Its function is as follows. Located at the top of the head of the 30S subunit, it contacts several helices of the 16S rRNA. In the 70S ribosome it contacts the 23S rRNA (bridge B1a) and protein L5 of the 50S subunit (bridge B1b), connecting the 2 subunits; these bridges are implicated in subunit movement. Contacts the tRNAs in the A and P-sites. The sequence is that of Small ribosomal subunit protein uS13 from Halalkalibacterium halodurans (strain ATCC BAA-125 / DSM 18197 / FERM 7344 / JCM 9153 / C-125) (Bacillus halodurans).